We begin with the raw amino-acid sequence, 308 residues long: 4-hydroxy-3-methylbut-2-enyl diphosphate reductase 2 (308 aa).

Cys-12 contributes to the [4Fe-4S] cluster binding site. 2 residues coordinate (2E)-4-hydroxy-3-methylbut-2-enyl diphosphate: His-41 and His-74. Dimethylallyl diphosphate-binding residues include His-41 and His-74. The isopentenyl diphosphate site is built by His-41 and His-74. Cys-96 serves as a coordination point for [4Fe-4S] cluster. His-124 lines the (2E)-4-hydroxy-3-methylbut-2-enyl diphosphate pocket. A dimethylallyl diphosphate-binding site is contributed by His-124. His-124 contributes to the isopentenyl diphosphate binding site. The Proton donor role is filled by Glu-126. Thr-164 provides a ligand contact to (2E)-4-hydroxy-3-methylbut-2-enyl diphosphate. Position 194 (Cys-194) interacts with [4Fe-4S] cluster. Positions 222, 223, 224, and 266 each coordinate (2E)-4-hydroxy-3-methylbut-2-enyl diphosphate. Dimethylallyl diphosphate contacts are provided by Ser-222, Ser-223, Asn-224, and Ser-266. Isopentenyl diphosphate is bound by residues Ser-222, Ser-223, Asn-224, and Ser-266.

Belongs to the IspH family. [4Fe-4S] cluster serves as cofactor.

The enzyme catalyses isopentenyl diphosphate + 2 oxidized [2Fe-2S]-[ferredoxin] + H2O = (2E)-4-hydroxy-3-methylbut-2-enyl diphosphate + 2 reduced [2Fe-2S]-[ferredoxin] + 2 H(+). It catalyses the reaction dimethylallyl diphosphate + 2 oxidized [2Fe-2S]-[ferredoxin] + H2O = (2E)-4-hydroxy-3-methylbut-2-enyl diphosphate + 2 reduced [2Fe-2S]-[ferredoxin] + 2 H(+). The protein operates within isoprenoid biosynthesis; dimethylallyl diphosphate biosynthesis; dimethylallyl diphosphate from (2E)-4-hydroxy-3-methylbutenyl diphosphate: step 1/1. It participates in isoprenoid biosynthesis; isopentenyl diphosphate biosynthesis via DXP pathway; isopentenyl diphosphate from 1-deoxy-D-xylulose 5-phosphate: step 6/6. Functionally, catalyzes the conversion of 1-hydroxy-2-methyl-2-(E)-butenyl 4-diphosphate (HMBPP) into a mixture of isopentenyl diphosphate (IPP) and dimethylallyl diphosphate (DMAPP). Acts in the terminal step of the DOXP/MEP pathway for isoprenoid precursor biosynthesis. This chain is 4-hydroxy-3-methylbut-2-enyl diphosphate reductase 2, found in Bradyrhizobium diazoefficiens (strain JCM 10833 / BCRC 13528 / IAM 13628 / NBRC 14792 / USDA 110).